A 94-amino-acid chain; its full sequence is Selenoprotein K (94 aa).

A helical transmembrane segment spans residues 20 to 42 (VSFLTDFFWGIAEFVVFFFKTLL). The segment at 46-94 (VKKRRGYGSSSDSRYDDGRGPPGNPPRRMGRISHLRGPSPPPMAGGUGR) is disordered. Sec92 is a non-standard amino acid (selenocysteine).

The protein belongs to the selenoprotein K family. Interacts with DERL1, DERL2, DERL3 and SELENOS. The SELENOK-SELENOS complex interacts with VCP. Interacts with ZDHHC6. Post-translationally, cleaved by CAPN2/m-calpain in resting macrophages but not in activated macrophages. Macrophage activation up-regulates expression of the calpain inhibitor CAST/calpastatin, resulting in inhibition of CAPN2 activity. In terms of processing, truncated SELENOK proteins produced by failed UGA/Sec decoding are ubiquitinated by the CRL2(KLHDC2) complex, which recognizes the diglycine (Gly-Gly) at the C-terminus of truncated SELENOK proteins. High expression in spleen and intestine (at protein level). Expressed in a range of immune cells including T and B-cells and also in myeloid cells including macrophages, neutrophils and dendritic cells (at protein level).

It localises to the endoplasmic reticulum membrane. The protein resides in the cell membrane. Its function is as follows. Required for Ca(2+) flux in immune cells and plays a role in T-cell proliferation and in T-cell and neutrophil migration. Involved in endoplasmic reticulum-associated degradation (ERAD) of soluble glycosylated proteins. Required for palmitoylation and cell surface expression of CD36 and involved in macrophage uptake of low-density lipoprotein and in foam cell formation. Together with ZDHHC6, required for palmitoylation of ITPR1 in immune cells, leading to regulate ITPR1 stability and function. Plays a role in protection of cells from ER stress-induced apoptosis. Protects cells from oxidative stress when overexpressed in cardiomyocytes. This chain is Selenoprotein K, found in Mus musculus (Mouse).